A 642-amino-acid polypeptide reads, in one-letter code: 5-aminolevulinate synthase, non-specific, mitochondrial (642 aa).

Residues 1-56 (METVVRRCPFLSRVPQAFLQKAGKSLLFYAQNCPKMMEVGAKPAPRTVSTSAAQCQ) constitute a mitochondrion transit peptide. The segment at 51–109 (SAAQCQQVKETPPANEKEKTAKAAVQQAPDESQMAQTPDGTQLPPGHPSPSTSQSSGSK) is disordered. Polar residues predominate over residues 79–90 (PDESQMAQTPDG). Residues 99–108 (SPSTSQSSGS) are compositionally biased toward low complexity. Residues R219, S336, and K355 each coordinate substrate. The pyridoxal 5'-phosphate site is built by S388, H416, and T444. Residue K447 is part of the active site. K447 bears the N6-(pyridoxal phosphate)lysine mark. 2 residues coordinate pyridoxal 5'-phosphate: T476 and T477. T564 provides a ligand contact to substrate. At P578 the chain carries Hydroxyproline.

Belongs to the class-II pyridoxal-phosphate-dependent aminotransferase family. Homodimer. Interacts (hydroxylated form) with VHL. Pyridoxal 5'-phosphate is required as a cofactor. In normoxia, is hydroxylated at Pro-578, promoting interaction with VHL, initiating ubiquitination and subsequent degradation via the proteasome. Post-translationally, ubiquitinated; in normoxia following hydroxylation and interaction with VHL, leading to its subsequent degradation via the proteasome. In terms of tissue distribution, expressed in the liver, kidney, brain and testis.

Its subcellular location is the mitochondrion inner membrane. It carries out the reaction succinyl-CoA + glycine + H(+) = 5-aminolevulinate + CO2 + CoA. Its pathway is porphyrin-containing compound metabolism; protoporphyrin-IX biosynthesis; 5-aminolevulinate from glycine: step 1/1. Catalyzes the pyridoxal 5'-phosphate (PLP)-dependent condensation of succinyl-CoA and glycine to form aminolevulinic acid (ALA), with CoA and CO2 as by-products. The protein is 5-aminolevulinate synthase, non-specific, mitochondrial (Alas1) of Rattus norvegicus (Rat).